The chain runs to 64 residues: MAQEQTKRGGGGDDDDVTDLGGPAGQERREKLAEDTDDLLDEIDDVLEENAEDFVRAYVQKGGQ.

Residues 1–11 (MAQEQTKRGGG) are compositionally biased toward basic and acidic residues. The tract at residues 1–36 (MAQEQTKRGGGGDDDDVTDLGGPAGQERREKLAEDT) is disordered. The interval 21–58 (GGPAGQERREKLAEDTDDLLDEIDDVLEENAEDFVRAY) is ARC ATPase binding. A coiled-coil region spans residues 24–52 (AGQERREKLAEDTDDLLDEIDDVLEENAE). Q64 carries the post-translational modification Deamidated glutamine. Q64 is covalently cross-linked (Isoglutamyl lysine isopeptide (Gln-Lys) (interchain with K-? in acceptor proteins)).

Belongs to the prokaryotic ubiquitin-like protein family. In terms of assembly, strongly interacts with the proteasome-associated ATPase ARC through a hydrophobic interface; the interacting region of Pup lies in its C-terminal half. There is one Pup binding site per ARC hexamer ring. In terms of processing, is modified by deamidation of its C-terminal glutamine to glutamate by the deamidase Dop, a prerequisite to the subsequent pupylation process.

Its pathway is protein degradation; proteasomal Pup-dependent pathway. In terms of biological role, protein modifier that is covalently attached to lysine residues of substrate proteins, thereby targeting them for proteasomal degradation. The tagging system is termed pupylation. The protein is Prokaryotic ubiquitin-like protein Pup of Mycobacteroides abscessus (strain ATCC 19977 / DSM 44196 / CCUG 20993 / CIP 104536 / JCM 13569 / NCTC 13031 / TMC 1543 / L948) (Mycobacterium abscessus).